A 415-amino-acid chain; its full sequence is Serine hydroxymethyltransferase (415 aa).

(6S)-5,6,7,8-tetrahydrofolate contacts are provided by residues Leu-117 and 121–123; that span reads GHL. N6-(pyridoxal phosphate)lysine is present on Lys-226.

This sequence belongs to the SHMT family. Homodimer. Pyridoxal 5'-phosphate is required as a cofactor.

The protein resides in the cytoplasm. The enzyme catalyses (6R)-5,10-methylene-5,6,7,8-tetrahydrofolate + glycine + H2O = (6S)-5,6,7,8-tetrahydrofolate + L-serine. Its pathway is one-carbon metabolism; tetrahydrofolate interconversion. It functions in the pathway amino-acid biosynthesis; glycine biosynthesis; glycine from L-serine: step 1/1. Functionally, catalyzes the reversible interconversion of serine and glycine with tetrahydrofolate (THF) serving as the one-carbon carrier. This reaction serves as the major source of one-carbon groups required for the biosynthesis of purines, thymidylate, methionine, and other important biomolecules. Also exhibits THF-independent aldolase activity toward beta-hydroxyamino acids, producing glycine and aldehydes, via a retro-aldol mechanism. In Dehalococcoides mccartyi (strain CBDB1), this protein is Serine hydroxymethyltransferase.